A 129-amino-acid polypeptide reads, in one-letter code: Large ribosomal subunit protein bL12 (129 aa).

It belongs to the bacterial ribosomal protein bL12 family. As to quaternary structure, homodimer. Part of the ribosomal stalk of the 50S ribosomal subunit. Forms a multimeric L10(L12)X complex, where L10 forms an elongated spine to which 2 to 4 L12 dimers bind in a sequential fashion. Binds GTP-bound translation factors.

In terms of biological role, forms part of the ribosomal stalk which helps the ribosome interact with GTP-bound translation factors. Is thus essential for accurate translation. This is Large ribosomal subunit protein bL12 from Thermosipho melanesiensis (strain DSM 12029 / CIP 104789 / BI429).